The sequence spans 120 residues: Large ribosomal subunit protein bL19 (120 aa).

The protein belongs to the bacterial ribosomal protein bL19 family.

Its function is as follows. This protein is located at the 30S-50S ribosomal subunit interface and may play a role in the structure and function of the aminoacyl-tRNA binding site. This chain is Large ribosomal subunit protein bL19, found in Cyanothece sp. (strain PCC 7425 / ATCC 29141).